A 104-amino-acid chain; its full sequence is DNA-directed RNA polymerase subunit omega (104 aa).

Belongs to the RNA polymerase subunit omega family. In terms of assembly, the RNAP catalytic core consists of 2 alpha, 1 beta, 1 beta' and 1 omega subunit. When a sigma factor is associated with the core the holoenzyme is formed, which can initiate transcription.

The enzyme catalyses RNA(n) + a ribonucleoside 5'-triphosphate = RNA(n+1) + diphosphate. Promotes RNA polymerase assembly. Latches the N- and C-terminal regions of the beta' subunit thereby facilitating its interaction with the beta and alpha subunits. In Streptococcus agalactiae serotype Ia (strain ATCC 27591 / A909 / CDC SS700), this protein is DNA-directed RNA polymerase subunit omega.